A 476-amino-acid chain; its full sequence is Aspartyl/glutamyl-tRNA(Asn/Gln) amidotransferase subunit B (476 aa).

Belongs to the GatB/GatE family. GatB subfamily. In terms of assembly, heterotrimer of A, B and C subunits.

The catalysed reaction is L-glutamyl-tRNA(Gln) + L-glutamine + ATP + H2O = L-glutaminyl-tRNA(Gln) + L-glutamate + ADP + phosphate + H(+). It carries out the reaction L-aspartyl-tRNA(Asn) + L-glutamine + ATP + H2O = L-asparaginyl-tRNA(Asn) + L-glutamate + ADP + phosphate + 2 H(+). Allows the formation of correctly charged Asn-tRNA(Asn) or Gln-tRNA(Gln) through the transamidation of misacylated Asp-tRNA(Asn) or Glu-tRNA(Gln) in organisms which lack either or both of asparaginyl-tRNA or glutaminyl-tRNA synthetases. The reaction takes place in the presence of glutamine and ATP through an activated phospho-Asp-tRNA(Asn) or phospho-Glu-tRNA(Gln). In Solidesulfovibrio magneticus (strain ATCC 700980 / DSM 13731 / RS-1) (Desulfovibrio magneticus), this protein is Aspartyl/glutamyl-tRNA(Asn/Gln) amidotransferase subunit B.